A 341-amino-acid chain; its full sequence is Glycerol-3-phosphate dehydrogenase [NAD(P)+] (341 aa).

Residues Ser15, Trp16, Arg36, and Lys110 each coordinate NADPH. Sn-glycerol 3-phosphate-binding residues include Lys110, Gly139, and Ser141. Ala143 is a binding site for NADPH. Residues Lys194, Asp247, Ser257, Arg258, and Asn259 each contribute to the sn-glycerol 3-phosphate site. Lys194 (proton acceptor) is an active-site residue. Arg258 lines the NADPH pocket. The NADPH site is built by Val282 and Glu284.

It belongs to the NAD-dependent glycerol-3-phosphate dehydrogenase family.

It is found in the cytoplasm. It carries out the reaction sn-glycerol 3-phosphate + NAD(+) = dihydroxyacetone phosphate + NADH + H(+). The enzyme catalyses sn-glycerol 3-phosphate + NADP(+) = dihydroxyacetone phosphate + NADPH + H(+). Its pathway is membrane lipid metabolism; glycerophospholipid metabolism. Functionally, catalyzes the reduction of the glycolytic intermediate dihydroxyacetone phosphate (DHAP) to sn-glycerol 3-phosphate (G3P), the key precursor for phospholipid synthesis. The polypeptide is Glycerol-3-phosphate dehydrogenase [NAD(P)+] (Stenotrophomonas maltophilia (strain R551-3)).